A 512-amino-acid chain; its full sequence is RLQLQESGPGLVKPSETLSLTCIVSGGPIRRTGYYWGWIRQPPGKGLEWIGGVYYTGSIYYNPSLRGRVTISVDTSRNQFSLNLRSMSAADTAMYYCARGNPPPYYDIGTGSDDGIDVWGQGTTVHVSSAPTKAPDVFPIISGCRHPKDNSPVVLACLITGYHPTSVTVTWYMGTQSQPQRTFPEIQRRDSYYMTSSQLSTPLQQWRQGEYKCVVQHTASKSKKEIFRWPESPKAQASSVPTAQPQAEGSLAKATTAPATTRNTGRGGEEKKKEKEKEEQEERETKTPECPSHTQPLGVYLLTPAVQDLWLRDKATFTCFVVGSDLKDAHLTWEVAGKVPTGGVEEGLLERHSNGSQSQHSRLTLPRSLWNAGTSVTCTLNHPSLPPQRLMALREPAAQAPVKLSLNLLASSDPPEAASWLLCEVSGFSPPNILLMWLEDQREVNTSGFAPARPPPQPGSTTFWAWSVLRVPAPPSPQPATYTCVVSHEDSRTLLNASRSLEVSYVTDHGPM.

2 Ig-like domains span residues 1–97 (RLQL…MYYC) and 135–227 (PDVF…KEIF). Residues 1 to 129 (RLQLQESGPG…GQGTTVHVSS (129 aa)) are variable (V) domain, involved in antigen recognition. 2 disulfide bridges follow: cysteine 22-cysteine 97 and cysteine 157-cysteine 213. The constant (C) domain stretch occupies residues 130–512 (APTKAPDVFP…VSYVTDHGPM (383 aa)). Residues 225–296 (EIFRWPESPK…TPECPSHTQP (72 aa)) are disordered. Positions 235–247 (AQASSVPTAQPQA) are enriched in polar residues. Residue serine 238 is glycosylated (O-linked (GalNAc...) serine). Threonine 255, threonine 256, threonine 260, and threonine 261 each carry an O-linked (GalNAc...) threonine glycan. Positions 267 to 287 (GGEEKKKEKEKEEQEERETKT) are enriched in basic and acidic residues. Ig-like domains are found at residues 304 to 392 (PAVQ…RLMA) and 396 to 502 (PAAQ…RSLE). 2 cysteine pairs are disulfide-bonded: cysteine 319-cysteine 378 and cysteine 423-cysteine 484. N-linked (GlcNAc...) asparagine glycosylation is found at asparagine 354, asparagine 445, and asparagine 496.

Immunoglobulins are composed of two identical heavy chains and two identical light chains; disulfide-linked. An IgD molecule contains thus a delta heavy chain combined with either a kappa or a lambda light chains. Kappa light chains are found predominantly on the membrane IgD (mIgD) form and lambda on the secreted IgD (sIgD) form, this fact is poorly understood. Membrane-bound IgD molecules are non-covalently associated with a heterodimer of CD79A and CD79B.

The protein localises to the secreted. The protein resides in the cell membrane. Functionally, immunoglobulins, also known as antibodies, are membrane-bound or secreted glycoproteins produced by B lymphocytes. In the recognition phase of humoral immunity, the membrane-bound immunoglobulins serve as receptors which, upon binding of a specific antigen, trigger the clonal expansion and differentiation of B lymphocytes into immunoglobulins-secreting plasma cells. Secreted immunoglobulins mediate the effector phase of humoral immunity, which results in the elimination of bound antigens. The antigen binding site is formed by the variable domain of one heavy chain, together with that of its associated light chain. Thus, each immunoglobulin has two antigen binding sites with remarkable affinity for a particular antigen. The variable domains are assembled by a process called V-(D)-J rearrangement and can then be subjected to somatic hypermutations which, after exposure to antigen and selection, allow affinity maturation for a particular antigen. IgD is the major antigen receptor isotype on the surface of most peripheral B cells, where it is coexpressed with IgM. The membrane-bound IgD (mIgD) induces the phosphorylation of CD79A and CD79B by the Src family of protein tyrosine kinases. Soluble IgD (sIgD) concentration in serum is below those of IgG, IgA, and IgM but much higher than that of IgE. IgM and IgD molecules present on B cells have identical V regions and antigen-binding sites. After the antigen binds to the B cell receptor, the secreted form sIgD is shut off. IgD is a potent inducer of TNF, IL1B, and IL1RN. IgD also induces release of IL6, IL10, and LIF from peripheral blood mononuclear cells. Monocytes seem to be the main producers of cytokines in vitro in the presence of IgD. This is Immunoglobulin delta heavy chain from Homo sapiens (Human).